Reading from the N-terminus, the 156-residue chain is Endoribonuclease YbeY (156 aa).

Zn(2+) is bound by residues His-122, His-126, and His-132.

The protein belongs to the endoribonuclease YbeY family. The cofactor is Zn(2+).

The protein resides in the cytoplasm. In terms of biological role, single strand-specific metallo-endoribonuclease involved in late-stage 70S ribosome quality control and in maturation of the 3' terminus of the 16S rRNA. The polypeptide is Endoribonuclease YbeY (Bacillus cytotoxicus (strain DSM 22905 / CIP 110041 / 391-98 / NVH 391-98)).